We begin with the raw amino-acid sequence, 37 residues long: Large ribosomal subunit protein bL36 (37 aa).

The protein belongs to the bacterial ribosomal protein bL36 family.

This Hydrogenobaculum sp. (strain Y04AAS1) protein is Large ribosomal subunit protein bL36.